The chain runs to 61 residues: Large ribosomal subunit protein uL30 (61 aa).

The protein belongs to the universal ribosomal protein uL30 family. In terms of assembly, part of the 50S ribosomal subunit.

The polypeptide is Large ribosomal subunit protein uL30 (Parafrankia sp. (strain EAN1pec)).